The sequence spans 423 residues: COUP transcription factor 1 (423 aa).

A disordered region spans residues 1–81 (MAMVVSSWRD…QGPPGSGQSQ (81 aa)). The span at 39-67 (EQQQQAGSGAPHTPQTPGQPGAPATPGTA) shows a compositional bias: low complexity. Positions 83–158 (HIECVVCGDK…VGMRREAVQR (76 aa)) form a DNA-binding region, nuclear receptor. 2 consecutive NR C4-type zinc fingers follow at residues 86 to 106 (CVVC…CEGC) and 122 to 146 (CRAN…LKKC). Residues 184 to 410 (YLSGYISLLL…TLIRDMLLSG (227 aa)) enclose the NR LBD domain.

This sequence belongs to the nuclear hormone receptor family. NR2 subfamily. As to quaternary structure, binds DNA as dimer; homodimer and probable heterodimer with NR2F6. Interacts with GTF2B; this interaction is direct. Interacts with COPS2.

Its subcellular location is the nucleus. Functionally, coup (chicken ovalbumin upstream promoter) transcription factor binds to the ovalbumin promoter and, in conjunction with another protein (S300-II) stimulates initiation of transcription. Binds to both direct repeats and palindromes of the 5'-AGGTCA-3' motif. Represses transcriptional activity of LHCG. The sequence is that of COUP transcription factor 1 (NR2F1) from Homo sapiens (Human).